The primary structure comprises 98 residues: DNA-binding protein Fis (98 aa).

Positions 74-93 (QTRAALMMGINRGTLRKKLK) form a DNA-binding region, H-T-H motif.

This sequence belongs to the transcriptional regulatory Fis family. As to quaternary structure, homodimer.

Functionally, activates ribosomal RNA transcription. Plays a direct role in upstream activation of rRNA promoters. This chain is DNA-binding protein Fis, found in Yersinia enterocolitica serotype O:8 / biotype 1B (strain NCTC 13174 / 8081).